The chain runs to 190 residues: Putative resolvase R771 (190 aa).

Positions 11-30 (SSVLGVHQRTLYQWDKKGWI) form a DNA-binding region, H-T-H motif. The Resolvase/invertase-type recombinase catalytic domain maps to 61–190 (LSICYVRVSS…RNGLKKYSNK (130 aa)). A coiled-coil region spans residues 66–92 (VRVSSNNQKDDLERQIKFMKKKYPNHT). The active-site O-(5'-phospho-DNA)-serine intermediate is the Ser-69.

This sequence belongs to the site-specific recombinase resolvase family.

Resolvase catalyzes the resolution (a site-specific recombination) of the cointegrated replicon to yield the final transposition products. The polypeptide is Putative resolvase R771 (Acanthamoeba polyphaga (Amoeba)).